Consider the following 395-residue polypeptide: L-methionine gamma-lyase (395 aa).

Residues 56 to 58 (YTR) and 86 to 87 (GM) each bind pyridoxal 5'-phosphate. Substrate is bound at residue tyrosine 111. 206–208 (SAT) is a pyridoxal 5'-phosphate binding site. The residue at position 209 (lysine 209) is an N6-(pyridoxal phosphate)lysine. Arginine 373 contributes to the substrate binding site.

Belongs to the trans-sulfuration enzymes family. L-methionine gamma-lyase subfamily. In terms of assembly, homotetramer. The cofactor is pyridoxal 5'-phosphate.

It carries out the reaction L-methionine + H2O = methanethiol + 2-oxobutanoate + NH4(+). The catalysed reaction is L-homocysteine + H2O = 2-oxobutanoate + hydrogen sulfide + NH4(+) + H(+). The enzyme catalyses L-cysteine + H2O = hydrogen sulfide + pyruvate + NH4(+) + H(+). Functionally, catalyzes the alpha,gamma-elimination of L-methionine to produce methanethiol, 2-oxobutanoate and ammonia, and that of L-homocysteine. Can also use L-cysteine as substrate, catalyzing its alpha,beta-elimination; this activity seems to only minimally contribute to the production of hydrogen sulfide (H2S) by F.nucleatum in the oral cavity, which is toxic for a large variety of cells in periodontal regions. The sequence is that of L-methionine gamma-lyase from Fusobacterium nucleatum subsp. nucleatum (strain ATCC 25586 / DSM 15643 / BCRC 10681 / CIP 101130 / JCM 8532 / KCTC 2640 / LMG 13131 / VPI 4355).